A 428-amino-acid chain; its full sequence is MFYTGSFWFIFFILPAIPFCHSWSVNNFLMTGPKAYLIYSSSVAAGAQSGIEECKYQFAWDKWNCPERTLQLSSHSGLRSDLNIHSTGASPAGSGLYDTGPTSPVWSINFNRILFSRLESHFNKTFLSRLQIPFPQGHTVQSATSLSTGFLSPANRETAFVHAISYAGVMYTLTRNCSLGDFDNCGCDDSRNGQLGGQGWLWGGCSDNVGFGETISKQFVDPLETGQDARAAMNLHNNEAGRKAVKSTMKRTCKCHGVSGSCTTQTCWLQLPEFREVGNYLKEKYHKALKVDLFHGAGNSAASRGAIAETFRSISKKEIVHLEDSPDYCLENKTLGLLGTEGRECLKRGKALSKWEKRSCRRLCGDCGLAVKERRADMVSSCNCKFHWCCAVKCEQCRKSVTKYFCVKKEKRGGGIPRKKESKLKKKL.

The signal sequence occupies residues 1-22; sequence MFYTGSFWFIFFILPAIPFCHS. A disulfide bridge connects residues cysteine 54 and cysteine 65. N-linked (GlcNAc...) asparagine glycosylation is found at asparagine 123 and asparagine 176. 10 disulfides stabilise this stretch: cysteine 177–cysteine 185, cysteine 187–cysteine 205, cysteine 253–cysteine 267, cysteine 255–cysteine 262, cysteine 329–cysteine 367, cysteine 345–cysteine 360, cysteine 364–cysteine 406, cysteine 382–cysteine 397, cysteine 384–cysteine 394, and cysteine 389–cysteine 390. The O-palmitoleoyl serine moiety is linked to residue serine 259. Asparagine 332 carries an N-linked (GlcNAc...) asparagine glycan.

The protein belongs to the Wnt family. Palmitoleoylation is required for efficient binding to frizzled receptors. Depalmitoleoylation leads to Wnt signaling pathway inhibition. In terms of processing, proteolytic processing by tiki1 and tiki2 promotes oxidation and formation of large disulfide-bond oligomers, leading to inactivation of wnt8b. As to expression, in adults, in brain.

Its subcellular location is the secreted. The protein localises to the extracellular space. It localises to the extracellular matrix. Functionally, ligand for members of the frizzled family of seven transmembrane receptors. Plays a role in the initiation of dorsal axis development. May activate a Nieuwkoop center-like signaling pathway. In Xenopus laevis (African clawed frog), this protein is Protein Wnt-8b (wnt8b).